We begin with the raw amino-acid sequence, 275 residues long: Large ribosomal subunit protein uL2 (275 aa).

A compositionally biased stretch (polar residues) spans 38–53; sequence SSKAGRNNNGRITTRH. Disordered stretches follow at residues 38 to 59 and 224 to 257; these read SSKAGRNNNGRITTRHQGGGHK and AMNPIDHPHGGGEGRTAAGRDPVSPWGTPTKGFR.

The protein belongs to the universal ribosomal protein uL2 family. As to quaternary structure, part of the 50S ribosomal subunit. Forms a bridge to the 30S subunit in the 70S ribosome.

In terms of biological role, one of the primary rRNA binding proteins. Required for association of the 30S and 50S subunits to form the 70S ribosome, for tRNA binding and peptide bond formation. It has been suggested to have peptidyltransferase activity; this is somewhat controversial. Makes several contacts with the 16S rRNA in the 70S ribosome. The polypeptide is Large ribosomal subunit protein uL2 (Burkholderia multivorans (strain ATCC 17616 / 249)).